Here is a 200-residue protein sequence, read N- to C-terminus: Small ribosomal subunit protein uS4 (200 aa).

The disordered stretch occupies residues 20-41 (TGTGKELDKRPYAPGQHGPNQR). The S4 RNA-binding domain maps to 92 to 152 (SRLDNLVYRL…EKSKNLDVVK (61 aa)).

The protein belongs to the universal ribosomal protein uS4 family. In terms of assembly, part of the 30S ribosomal subunit. Contacts protein S5. The interaction surface between S4 and S5 is involved in control of translational fidelity.

One of the primary rRNA binding proteins, it binds directly to 16S rRNA where it nucleates assembly of the body of the 30S subunit. Functionally, with S5 and S12 plays an important role in translational accuracy. The sequence is that of Small ribosomal subunit protein uS4 from Oceanobacillus iheyensis (strain DSM 14371 / CIP 107618 / JCM 11309 / KCTC 3954 / HTE831).